The following is a 246-amino-acid chain: Proteasome subunit alpha type-5 (246 aa).

This sequence belongs to the peptidase T1A family. In terms of assembly, the 26S proteasome consists of a 20S proteasome core and two 19S regulatory subunits. The 20S proteasome core is composed of 28 subunits that are arranged in four stacked rings, resulting in a barrel-shaped structure. The two end rings are each formed by seven alpha subunits, and the two central rings are each formed by seven beta subunits. The catalytic chamber with the active sites is on the inside of the barrel.

It is found in the cytoplasm. The protein localises to the nucleus. Its function is as follows. The proteasome is a multicatalytic proteinase complex which is characterized by its ability to cleave peptides with Arg, Phe, Tyr, Leu, and Glu adjacent to the leaving group at neutral or slightly basic pH. The proteasome has an ATP-dependent proteolytic activity. The sequence is that of Proteasome subunit alpha type-5 from Trypanosoma brucei brucei.